The following is a 426-amino-acid chain: 3-phosphoshikimate 1-carboxyvinyltransferase (426 aa).

3-phosphoshikimate contacts are provided by Lys22, Ser23, and Arg27. Lys22 is a binding site for phosphoenolpyruvate. Residues Gly96 and Arg124 each coordinate phosphoenolpyruvate. Residues Ser170, Ser171, Gln172, Ser198, Asp314, Asn337, and Lys341 each coordinate 3-phosphoshikimate. Residue Gln172 coordinates phosphoenolpyruvate. Catalysis depends on Asp314, which acts as the Proton acceptor. Phosphoenolpyruvate contacts are provided by Arg345, Arg387, and Lys412.

It belongs to the EPSP synthase family. Monomer.

Its subcellular location is the cytoplasm. The enzyme catalyses 3-phosphoshikimate + phosphoenolpyruvate = 5-O-(1-carboxyvinyl)-3-phosphoshikimate + phosphate. The protein operates within metabolic intermediate biosynthesis; chorismate biosynthesis; chorismate from D-erythrose 4-phosphate and phosphoenolpyruvate: step 6/7. Catalyzes the transfer of the enolpyruvyl moiety of phosphoenolpyruvate (PEP) to the 5-hydroxyl of shikimate-3-phosphate (S3P) to produce enolpyruvyl shikimate-3-phosphate and inorganic phosphate. The protein is 3-phosphoshikimate 1-carboxyvinyltransferase of Aliivibrio fischeri (strain MJ11) (Vibrio fischeri).